The primary structure comprises 1308 residues: Contactin-associated protein-like 4 (1308 aa).

The signal sequence occupies residues methionine 1–alanine 25. Residues glycine 26–alanine 1241 lie on the Extracellular side of the membrane. Residues cysteine 31–cysteine 177 enclose the F5/8 type C domain. Residues cysteine 31 and cysteine 177 are joined by a disulfide bond. Laminin G-like domains are found at residues phenylalanine 212 to cysteine 364 and phenylalanine 398 to cysteine 547. 4 N-linked (GlcNAc...) asparagine glycosylation sites follow: asparagine 260, asparagine 285, asparagine 359, and asparagine 538. Disulfide bonds link cysteine 332–cysteine 364, cysteine 515–cysteine 547, cysteine 553–cysteine 564, and cysteine 558–cysteine 573. One can recognise an EGF-like 1 domain in the interval isoleucine 549 to histidine 586. Asparagine 574 carries N-linked (GlcNAc...) asparagine glycosylation. A disulfide bond links cysteine 575 and cysteine 585. The Fibrinogen C-terminal domain occupies asparagine 587–tryptophan 792. 5 N-linked (GlcNAc...) asparagine glycosylation sites follow: asparagine 602, asparagine 625, asparagine 637, asparagine 706, and asparagine 748. A Laminin G-like 3 domain is found at asparagine 793–glycine 957. Cystine bridges form between cysteine 931-cysteine 958, cysteine 962-cysteine 975, cysteine 969-cysteine 984, and cysteine 986-cysteine 996. One can recognise an EGF-like 2 domain in the interval cysteine 958–serine 997. Asparagine 1023 and asparagine 1073 each carry an N-linked (GlcNAc...) asparagine glycan. Residues phenylalanine 1046–cysteine 1202 enclose the Laminin G-like 4 domain. An intrachain disulfide couples cysteine 1167 to cysteine 1202. Residues valine 1242 to valine 1262 traverse the membrane as a helical segment. Topologically, residues arginine 1263 to phenylalanine 1308 are cytoplasmic.

It belongs to the neurexin family. As to quaternary structure, interacts with TIAM1.

Its subcellular location is the presynaptic cell membrane. Its function is as follows. Presynaptic protein involved in both dopaminergic synaptic transmission and GABAergic system, thereby participating in the structural maturation of inhibitory interneuron synapses. Involved in the dopaminergic synaptic transmission by attenuating dopamine release through a presynaptic mechanism. Also participates in the GABAergic system. The chain is Contactin-associated protein-like 4 (CNTNAP4) from Homo sapiens (Human).